Here is a 270-residue protein sequence, read N- to C-terminus: Phosphonates import ATP-binding protein PhnC 2 (270 aa).

The region spanning 2-245 (LVVEGLTCRF…IARELYDLEA (244 aa)) is the ABC transporter domain. Position 34 to 41 (34 to 41 (GRSGAGKS)) interacts with ATP.

This sequence belongs to the ABC transporter superfamily. Phosphonates importer (TC 3.A.1.9.1) family. In terms of assembly, the complex is composed of two ATP-binding proteins (PhnC), two transmembrane proteins (PhnE) and a solute-binding protein (PhnD).

The protein localises to the cell inner membrane. The catalysed reaction is phosphonate(out) + ATP + H2O = phosphonate(in) + ADP + phosphate + H(+). In terms of biological role, part of the ABC transporter complex PhnCDE involved in phosphonates import. Responsible for energy coupling to the transport system. This chain is Phosphonates import ATP-binding protein PhnC 2, found in Rhodopseudomonas palustris (strain BisA53).